A 350-amino-acid chain; its full sequence is tRNA uridine(34) hydroxylase (350 aa).

The Rhodanese domain occupies 146-240 (DDPDALFIDM…YARKAREQGL (95 aa)). Cys-200 (cysteine persulfide intermediate) is an active-site residue.

Belongs to the TrhO family.

It catalyses the reaction uridine(34) in tRNA + AH2 + O2 = 5-hydroxyuridine(34) in tRNA + A + H2O. Catalyzes oxygen-dependent 5-hydroxyuridine (ho5U) modification at position 34 in tRNAs, the first step in 5-carboxymethoxyuridine (cmo5U) biosynthesis. May be part of an alternate pathway, which is able to bypass cmo5U biogenesis in a subset of tRNAs under aerobic conditions. The protein is tRNA uridine(34) hydroxylase of Escherichia coli O9:H4 (strain HS).